Consider the following 259-residue polypeptide: L-ornithine N(alpha)-acyltransferase (259 aa).

It belongs to the acetyltransferase family. OlsB subfamily.

The enzyme catalyses a (3R)-hydroxyacyl-[ACP] + L-ornithine = a lyso-ornithine lipid + holo-[ACP] + H(+). It participates in lipid metabolism. In terms of biological role, catalyzes the first step in the biosynthesis of ornithine lipids, which are phosphorus-free membrane lipids. Catalyzes the 3-hydroxyacyl-acyl carrier protein-dependent acylation of ornithine to form lyso-ornithine lipid (LOL). The protein is L-ornithine N(alpha)-acyltransferase of Rhodobacter capsulatus (strain ATCC BAA-309 / NBRC 16581 / SB1003).